A 200-amino-acid polypeptide reads, in one-letter code: MTRKTRIQPIEHAAEVDDNGYDRPSKSQLKREMHELQVLGQALVDLPKDALKRMPMPESLSDAVREARRITDHEGKRRQLQYVGRVMRTLTDDETAALRTALDAQRGVNKAATARLHWIERTRDQLLANDDALTEFLRQHPDADIQEGRTLIRNARKEAQQGKPPRYFRELFQWIKTASGTPGGDDEAADEAGDDHDDEA.

Disordered regions lie at residues 1 to 25 and 177 to 200; these read MTRK…DRPS and TASG…DDEA. A compositionally biased stretch (basic and acidic residues) spans 12–25; the sequence is HAAEVDDNGYDRPS. The segment covering 184–200 has biased composition (acidic residues); the sequence is GDDEAADEAGDDHDDEA.

This sequence belongs to the DarP family.

The protein localises to the cytoplasm. In terms of biological role, member of a network of 50S ribosomal subunit biogenesis factors which assembles along the 30S-50S interface, preventing incorrect 23S rRNA structures from forming. Promotes peptidyl transferase center (PTC) maturation. In Burkholderia ambifaria (strain MC40-6), this protein is Dual-action ribosomal maturation protein DarP.